The following is a 459-amino-acid chain: Argininosuccinate lyase (459 aa).

It belongs to the lyase 1 family. Argininosuccinate lyase subfamily.

The protein resides in the cytoplasm. It catalyses the reaction 2-(N(omega)-L-arginino)succinate = fumarate + L-arginine. It functions in the pathway amino-acid biosynthesis; L-arginine biosynthesis; L-arginine from L-ornithine and carbamoyl phosphate: step 3/3. This chain is Argininosuccinate lyase, found in Staphylococcus aureus (strain MRSA252).